The following is a 225-amino-acid chain: 3-dehydroquinate dehydratase (225 aa).

Residues Ser6, 30 to 32 (EWR), and Arg62 contribute to the 3-dehydroquinate site. The active-site Proton donor/acceptor is His118. Catalysis depends on Lys143, which acts as the Schiff-base intermediate with substrate. Arg186, Ser205, and Gln209 together coordinate 3-dehydroquinate.

The protein belongs to the type-I 3-dehydroquinase family. Homodimer.

The catalysed reaction is 3-dehydroquinate = 3-dehydroshikimate + H2O. The protein operates within metabolic intermediate biosynthesis; chorismate biosynthesis; chorismate from D-erythrose 4-phosphate and phosphoenolpyruvate: step 3/7. Involved in the third step of the chorismate pathway, which leads to the biosynthesis of aromatic amino acids. Catalyzes the cis-dehydration of 3-dehydroquinate (DHQ) and introduces the first double bond of the aromatic ring to yield 3-dehydroshikimate. In Streptococcus pneumoniae (strain ATCC 700669 / Spain 23F-1), this protein is 3-dehydroquinate dehydratase.